The chain runs to 461 residues: Kynureninase (461 aa).

Residues leucine 114, threonine 115, 142 to 145, aspartate 228, histidine 231, and tyrosine 253 contribute to the pyridoxal 5'-phosphate site; that span reads FPSD. At lysine 254 the chain carries N6-(pyridoxal phosphate)lysine. Pyridoxal 5'-phosphate is bound by residues tryptophan 288 and asparagine 316.

The protein belongs to the kynureninase family. As to quaternary structure, homodimer. Requires pyridoxal 5'-phosphate as cofactor.

It is found in the cytoplasm. It catalyses the reaction L-kynurenine + H2O = anthranilate + L-alanine + H(+). The enzyme catalyses 3-hydroxy-L-kynurenine + H2O = 3-hydroxyanthranilate + L-alanine + H(+). Its pathway is amino-acid degradation; L-kynurenine degradation; L-alanine and anthranilate from L-kynurenine: step 1/1. It functions in the pathway cofactor biosynthesis; NAD(+) biosynthesis; quinolinate from L-kynurenine: step 2/3. Functionally, catalyzes the cleavage of L-kynurenine (L-Kyn) and L-3-hydroxykynurenine (L-3OHKyn) into anthranilic acid (AA) and 3-hydroxyanthranilic acid (3-OHAA), respectively. The sequence is that of Kynureninase from Lodderomyces elongisporus (strain ATCC 11503 / CBS 2605 / JCM 1781 / NBRC 1676 / NRRL YB-4239) (Yeast).